A 104-amino-acid chain; its full sequence is NADH-quinone oxidoreductase subunit K (104 aa).

The next 3 membrane-spanning stretches (helical) occupy residues 4-24 (VPAS…LFGA), 31-51 (VIVL…LVAF), and 67-87 (LFTM…LIAL).

The protein belongs to the complex I subunit 4L family. As to quaternary structure, NDH-1 is composed of 14 different subunits. Subunits NuoA, H, J, K, L, M, N constitute the membrane sector of the complex.

It localises to the cell membrane. It carries out the reaction a quinone + NADH + 5 H(+)(in) = a quinol + NAD(+) + 4 H(+)(out). NDH-1 shuttles electrons from NADH, via FMN and iron-sulfur (Fe-S) centers, to quinones in the respiratory chain. The immediate electron acceptor for the enzyme in this species is believed to be a menaquinone. Couples the redox reaction to proton translocation (for every two electrons transferred, four hydrogen ions are translocated across the cytoplasmic membrane), and thus conserves the redox energy in a proton gradient. This chain is NADH-quinone oxidoreductase subunit K, found in Bacillus cereus (strain G9842).